An 86-amino-acid polypeptide reads, in one-letter code: Cell division topological specificity factor (86 aa).

Belongs to the MinE family.

Functionally, prevents the cell division inhibition by proteins MinC and MinD at internal division sites while permitting inhibition at polar sites. This ensures cell division at the proper site by restricting the formation of a division septum at the midpoint of the long axis of the cell. The polypeptide is Cell division topological specificity factor (Polaromonas sp. (strain JS666 / ATCC BAA-500)).